A 313-amino-acid chain; its full sequence is Ribosomal RNA small subunit methyltransferase H (313 aa).

Residues 35 to 37, Asp55, Phe81, Asp103, and Gln110 each bind S-adenosyl-L-methionine; that span reads GGH.

The protein belongs to the methyltransferase superfamily. RsmH family.

It is found in the cytoplasm. The enzyme catalyses cytidine(1402) in 16S rRNA + S-adenosyl-L-methionine = N(4)-methylcytidine(1402) in 16S rRNA + S-adenosyl-L-homocysteine + H(+). Specifically methylates the N4 position of cytidine in position 1402 (C1402) of 16S rRNA. This is Ribosomal RNA small subunit methyltransferase H from Pseudomonas syringae pv. syringae (strain B728a).